Reading from the N-terminus, the 48-residue chain is Large ribosomal subunit protein eL40 (48 aa).

Belongs to the eukaryotic ribosomal protein eL40 family.

This Methanoculleus marisnigri (strain ATCC 35101 / DSM 1498 / JR1) protein is Large ribosomal subunit protein eL40.